The following is a 352-amino-acid chain: Staphylococcal superantigen-like 3 (352 aa).

The signal sequence occupies residues 1–30; the sequence is MKMRTIAKTSLALGLLTTGAITVTTQSVKA. The interval 61–165 is disordered; the sequence is ATTQAANTRQ…TIKQAQTDMT (105 aa). Residues 69–104 are compositionally biased toward basic and acidic residues; it reads RQERTPKLEKAPNTNEEKTSASKIEKISQPKQEEQK. A compositionally biased stretch (low complexity) spans 114 to 141; that stretch reads PKQEQSQTTTESTTPKTKVTTPPSTNTP. Residues 142–164 are compositionally biased toward polar residues; sequence QPMQSTKSDTPQSPTIKQAQTDM. A sialyl Lewis X-binding region spans residues 228 to 326; sequence IDVFIVLEDN…VIKMKNGGKY (99 aa).

It belongs to the staphylococcal/streptococcal toxin family. As to quaternary structure, interacts with host TLR2 (via its extracellular domain).

The protein localises to the secreted. Its function is as follows. Secreted protein that plays an essential role in immune innate response inhibition by interacting with and inhibiting host TLR2. In turn, bacteria recognition by immune cells is impaired and cytokine production is inhibited. Mechanistically, by interacting with TLR2, blocks ligand binding and thus inhibits activation. Second, by interacting with an already formed TLR2-lipopeptide complex, prevents TLR heterodimerization and downstream signaling. The interaction with host TLR2 does not involve sialyl Lewis X interactions. In Staphylococcus aureus (strain Newman), this protein is Staphylococcal superantigen-like 3.